A 985-amino-acid polypeptide reads, in one-letter code: Exocyst complex component 4 (985 aa).

Residues 36–70 are a coiled coil; that stretch reads SETTEERQKEKQKIEAEFKRSDLRLNELVSRHDQQ. Residues S235, S456, S459, S682, and S686 each carry the phosphoserine modification. Residues 434–480 form a disordered region; that stretch reads DKSSHVGTSNNSDAFKEHRRNASDASVDDNLAGQLGGSGKGSTSGLF.

It belongs to the SEC8 family. As to quaternary structure, the exocyst complex is composed of Sec3/Exoc1, Sec5/Exoc2, Sec6/Exoc3, Sec8/Exoc4, Sec10/Exoc5, Sec15/Exoc6, exo70/Exoc7 and Exo84/Exoc8. In terms of tissue distribution, abundant in the embryonic and larval glutamatergic neuromuscular junctions (NMJs), pre and postsynaptically.

Component of the exocyst complex involved in the docking of exocytic vesicles with fusion sites on the plasma membrane. Involved in regulation of synaptic microtubule formation, and also regulation of synaptic growth and glutamate receptor trafficking. Does not appear to be required for basal neurotransmission. The chain is Exocyst complex component 4 from Drosophila melanogaster (Fruit fly).